Reading from the N-terminus, the 358-residue chain is Phospho-N-acetylmuramoyl-pentapeptide-transferase (358 aa).

10 consecutive transmembrane segments (helical) span residues 25–45 (RTIY…PWVI), 73–93 (TMGG…WADL), 97–117 (YVWT…TDDY), 134–154 (MFWQ…VAGM), 172–192 (YLYI…VNLT), 197–217 (GLAI…AYIA), 233–253 (GAGE…GFLW), 261–281 (VFMG…LAVI), 286–306 (MLLV…IFQV), and 335–355 (KIIV…ISTL).

Belongs to the glycosyltransferase 4 family. MraY subfamily. Mg(2+) is required as a cofactor.

The protein resides in the cell inner membrane. The enzyme catalyses UDP-N-acetyl-alpha-D-muramoyl-L-alanyl-gamma-D-glutamyl-meso-2,6-diaminopimeloyl-D-alanyl-D-alanine + di-trans,octa-cis-undecaprenyl phosphate = di-trans,octa-cis-undecaprenyl diphospho-N-acetyl-alpha-D-muramoyl-L-alanyl-D-glutamyl-meso-2,6-diaminopimeloyl-D-alanyl-D-alanine + UMP. It participates in cell wall biogenesis; peptidoglycan biosynthesis. Catalyzes the initial step of the lipid cycle reactions in the biosynthesis of the cell wall peptidoglycan: transfers peptidoglycan precursor phospho-MurNAc-pentapeptide from UDP-MurNAc-pentapeptide onto the lipid carrier undecaprenyl phosphate, yielding undecaprenyl-pyrophosphoryl-MurNAc-pentapeptide, known as lipid I. This chain is Phospho-N-acetylmuramoyl-pentapeptide-transferase, found in Geobacter sulfurreducens (strain ATCC 51573 / DSM 12127 / PCA).